The chain runs to 280 residues: Transcription factor HES-1 (280 aa).

The disordered stretch occupies residues 1-44 (MPADIMEKNSSSPVAATPASVNTTPDKPKTASEHRKSSKPIMEK). The span at 10-21 (SSSPVAATPASV) shows a compositional bias: low complexity. Residues 26 to 35 (DKPKTASEHR) are compositionally biased toward basic and acidic residues. A bHLH domain is found at 34 to 91 (HRKSSKPIMEKRRRARINESLSQLKTLILDALKKDSSRHSKLEKADILEMTVKHLRNL). The Orange domain occupies 110-143 (YRAGFSECMNEVTRFLSTCEGVNTEVRTRLLGHL). 2 disordered regions span residues 157-200 (GQPH…PPGG) and 254-280 (TSVGPNAVSPSSGPSLTADSMWRPWRN). Composition is skewed to pro residues over residues 164 to 174 (QAPPPPPPGPG) and 181 to 200 (FAPPPPLVPIPGGAAPPPGG). Over residues 254–271 (TSVGPNAVSPSSGPSLTA) the composition is skewed to polar residues. Residues 275 to 278 (WRPW) carry the WRPW motif motif.

As to quaternary structure, transcription repression requires formation of a complex with a corepressor protein of the Groucho/TLE family. Interacts with SIRT1. Interacts (via WPRW motif) with TLE1, and more weakly with TLE2. Interacts with HES6. Interacts with an FA complex, composed of FANCA, FANCF, FANCG and FANCL, but not of FANCC, nor FANCE.

The protein localises to the nucleus. Transcriptional repressor of genes that require a bHLH protein for their transcription. May act as a negative regulator of myogenesis by inhibiting the functions of MYOD1 and ASH1. Binds DNA on N-box motifs: 5'-CACNAG-3' with high affinity and on E-box motifs: 5'-CANNTG-3' with low affinity. May play a role in a functional FA core complex response to DNA cross-link damage, being required for the stability and nuclear localization of FA core complex proteins, as well as for FANCD2 monoubiquitination in response to DNA damage. The sequence is that of Transcription factor HES-1 (HES1) from Bos taurus (Bovine).